The following is a 318-amino-acid chain: L-malyl-CoA/beta-methylmalyl-CoA lyase (318 aa).

Residues F19, R24, K30, and R76 each contribute to the substrate site. Mg(2+) contacts are provided by E141 and D168. Substrate is bound by residues 167–168 and 251–252; these read AD and IH.

It belongs to the HpcH/HpaI aldolase family. As to quaternary structure, homohexamer. Dimer of trimers. Requires Mg(2+) as cofactor. Mn(2+) serves as cofactor.

The enzyme catalyses (S)-malyl-CoA = glyoxylate + acetyl-CoA. The catalysed reaction is (2R,3S)-beta-methylmalyl-CoA = propanoyl-CoA + glyoxylate. Its activity is regulated as follows. In vitro inhibited by EDTA. Functionally, involved in the ethylmalonyl-CoA pathway for acetate assimilation. Catalyzes the reversible condensation of glyoxylate and acetyl-CoA to L-malyl-CoA and the reversible condensation of glyoxylate and propionyl-CoA to beta-methylmalyl-CoA. In Rhodobacter capsulatus (Rhodopseudomonas capsulata), this protein is L-malyl-CoA/beta-methylmalyl-CoA lyase.